Here is a 487-residue protein sequence, read N- to C-terminus: Protein FAM221B (487 aa).

Polar residues-rich tracts occupy residues 1-13 (MEANKTTEGPQDT) and 36-48 (HETPLQPSSSQKH). 2 disordered regions span residues 1–103 (MEAN…QSVT) and 132–289 (QLSP…VTSR). Low complexity predominate over residues 81 to 103 (PPVKSSSSGLLSLPPQLSPQSVT). Basic and acidic residues-rich tracts occupy residues 227 to 236 (ESEHFPKHSF) and 243 to 253 (AKEDESTKEGE). Position 248 is a phosphoserine (serine 248).

It belongs to the FAM221 family.

The chain is Protein FAM221B (Fam221b) from Mus musculus (Mouse).